The chain runs to 202 residues: Protein-methionine-sulfoxide reductase heme-binding subunit MsrQ (202 aa).

The next 6 membrane-spanning stretches (helical) occupy residues Leu8 to Phe28, Leu42 to Leu62, Leu75 to Leu95, Pro110 to Asn130, Leu147 to Leu167, and Glu169 to Ala189.

It belongs to the MsrQ family. As to quaternary structure, heterodimer of a catalytic subunit (MsrP) and a heme-binding subunit (MsrQ). FMN serves as cofactor. It depends on heme b as a cofactor.

The protein resides in the cell inner membrane. Part of the MsrPQ system that repairs oxidized periplasmic proteins containing methionine sulfoxide residues (Met-O), using respiratory chain electrons. Thus protects these proteins from oxidative-stress damage caused by reactive species of oxygen and chlorine generated by the host defense mechanisms. MsrPQ is essential for the maintenance of envelope integrity under bleach stress, rescuing a wide series of structurally unrelated periplasmic proteins from methionine oxidation. MsrQ provides electrons for reduction to the reductase catalytic subunit MsrP, using the quinone pool of the respiratory chain. The protein is Protein-methionine-sulfoxide reductase heme-binding subunit MsrQ of Pseudomonas aeruginosa (strain UCBPP-PA14).